The primary structure comprises 1191 residues: WASH complex subunit homolog 5 (1191 aa).

It belongs to the strumpellin family. Component of the WASH complex.

The protein resides in the early endosome. Functionally, acts at least in part as component of the WASH complex which may regulate wash nucleation-promoting factor (NPF) activity and is required for its membrane targeting during endosomal sorting. During embryogenesis, not involved in the wash-dependent developmental migration of hemocytes anteriorly from the tail. In Drosophila melanogaster (Fruit fly), this protein is WASH complex subunit homolog 5.